A 292-amino-acid chain; its full sequence is NAD kinase (292 aa).

Residue Asp-73 is the Proton acceptor of the active site. NAD(+)-binding positions include 73 to 74 (DG), 147 to 148 (NE), His-158, Arg-175, Asp-177, 188 to 193 (TAYSLS), and Gln-247.

The protein belongs to the NAD kinase family. A divalent metal cation is required as a cofactor.

The protein resides in the cytoplasm. It catalyses the reaction NAD(+) + ATP = ADP + NADP(+) + H(+). Involved in the regulation of the intracellular balance of NAD and NADP, and is a key enzyme in the biosynthesis of NADP. Catalyzes specifically the phosphorylation on 2'-hydroxyl of the adenosine moiety of NAD to yield NADP. This Erwinia tasmaniensis (strain DSM 17950 / CFBP 7177 / CIP 109463 / NCPPB 4357 / Et1/99) protein is NAD kinase.